A 1077-amino-acid polypeptide reads, in one-letter code: Deoxyribonuclease CdiA (1077 aa).

The tract at residues I67–S384 is FHA-2. Over residues Q531–G546 the composition is skewed to polar residues. The disordered stretch occupies residues Q531–E555. Residues V781–N784 carry the VENN CT cleavage motif motif. The tract at residues M954–K1077 is DNase activity.

In terms of assembly, interacts with cognate immunity protein CdiI-YPIII, which blocks its toxic DNase activity. Requires Zn(2+) as cofactor.

It is found in the target cell. Its subcellular location is the target cell cytoplasm. Its function is as follows. Toxic component of a toxin-immunity protein module, which functions as a cellular contact-dependent growth inhibition (CDI) system. CDI modules allow bacteria to communicate with and inhibit the growth of closely related neighboring bacteria in a contact-dependent fashion. The C-terminal 123 residues (954-1077) has DNase activity in the presence of Zn(2+), converting supercoiled DNA into open-circular form. Toxic activity is neutralized by coexpression of the cognate immunity protein CdiI-YPIII, but not by non-cognate immunity proteins from other toxin-immunity modules. Expression of the DNase domain as a chimera allows bacteria to attack other non-immune bacteria which become filamentous and have lost DNA staining. In terms of biological role, the CdiA protein is thought to be exported from the cell through the central lumen of CdiB, the other half of its two-partner system (TPS). The TPS domain probably remains associated with CdiB while the FHA-1 domain forms an extended filament with the receptor-binding domain (RBD) at its extremity; in the secretion arrested state the C-terminus of the RBD and YP domains form a hairpin-like structure as the FHA-2, PT and CT domains are periplasmic. The YP domain is probably responsible for this arrest at the point where it re-enters the host cell periplasm. Upon binding to a target cell outer membrane receptor a signal is transmitted to activate secretion. The filament elongates slightly, the rest of CdiA is secreted and the FHA-2 domain becomes stably associated with the target cell's outer membrane where it facilitates entry of the toxic CT domain into the target cell periplasm. From there the toxic CT domain is cleaved and gains access to the target cell cytoplasm via an inner membrane protein. The chain is Deoxyribonuclease CdiA from Yersinia pseudotuberculosis serotype O:3 (strain YPIII).